Consider the following 154-residue polypeptide: Aspartate carbamoyltransferase regulatory chain (154 aa).

Residues C109, C114, C138, and C141 each contribute to the Zn(2+) site.

The protein belongs to the PyrI family. Contains catalytic and regulatory chains. It depends on Zn(2+) as a cofactor.

Involved in allosteric regulation of aspartate carbamoyltransferase. The chain is Aspartate carbamoyltransferase regulatory chain from Photobacterium profundum (strain SS9).